The following is a 291-amino-acid chain: 33 kDa chaperonin (291 aa).

Disulfide bonds link C237–C239 and C270–C273.

It belongs to the HSP33 family. Under oxidizing conditions two disulfide bonds are formed involving the reactive cysteines. Under reducing conditions zinc is bound to the reactive cysteines and the protein is inactive.

Its subcellular location is the cytoplasm. Redox regulated molecular chaperone. Protects both thermally unfolding and oxidatively damaged proteins from irreversible aggregation. Plays an important role in the bacterial defense system toward oxidative stress. This chain is 33 kDa chaperonin, found in Bacillus anthracis (strain A0248).